The sequence spans 378 residues: MPVKLRWPWLGIAIPTFLISFIGYGAHYFILSNFLSVPKQITFEFCLSMIWLSYYLAICTNPGRPLPNYKPPPDIWRNFCKKCQSYKPERSHHCKTCNQCVLMMDHHCPWTMNCVGFANYPHFLRFLFWIIVTTSVLFCIQAKRIYFIWQQRHLPGYFFKKSELIFLTISSPLNSFVLLTITILFLRCLFNQILNGRSQIESWDMDRLESLFNSGRLTQKLIDNTWRIYPESRSFQNKKDAEEHLTKKRPRFDELVNFPYDFDLYTNALLYLGPIHLWLWPYGVPTGDGNNFPKNGISKYEANSSLEDHILSLPWPPDGGKTNTVFNHGSSTIEMRNESGEQLIRTRLPQNGRHASREKWYNDWGESLDDFGVDVDME.

Over 1–9 (MPVKLRWPW) the chain is Cytoplasmic. A helical membrane pass occupies residues 10-30 (LGIAIPTFLISFIGYGAHYFI). Topologically, residues 31 to 40 (LSNFLSVPKQ) are lumenal. Residues 41–61 (ITFEFCLSMIWLSYYLAICTN) form a helical membrane-spanning segment. The Cytoplasmic portion of the chain corresponds to 62-119 (PGRPLPNYKPPPDIWRNFCKKCQSYKPERSHHCKTCNQCVLMMDHHCPWTMNCVGFAN). One can recognise a DHHC domain in the interval 78 to 128 (NFCKKCQSYKPERSHHCKTCNQCVLMMDHHCPWTMNCVGFANYPHFLRFLF). Catalysis depends on C108, which acts as the S-palmitoyl cysteine intermediate. Residues 120-140 (YPHFLRFLFWIIVTTSVLFCI) traverse the membrane as a helical segment. Residues 141 to 164 (QAKRIYFIWQQRHLPGYFFKKSEL) lie on the Lumenal side of the membrane. A helical transmembrane segment spans residues 165–185 (IFLTISSPLNSFVLLTITILF). The Cytoplasmic segment spans residues 186–378 (LRCLFNQILN…DDFGVDVDME (193 aa)).

The protein belongs to the DHHC palmitoyltransferase family. PFA4 subfamily. Autopalmitoylated.

The protein localises to the endoplasmic reticulum membrane. It catalyses the reaction L-cysteinyl-[protein] + hexadecanoyl-CoA = S-hexadecanoyl-L-cysteinyl-[protein] + CoA. Its function is as follows. Mediates the reversible addition of palmitate to target proteins, thereby regulating their membrane association and biological function. Palmitoylates several amino acid permeases. Palmitoylates chitin synthase CHS3, which is required for its proper export from the ER. Can palmitoylate RAS2 in vitro. The protein is Palmitoyltransferase PFA4 of Saccharomyces cerevisiae (strain ATCC 204508 / S288c) (Baker's yeast).